We begin with the raw amino-acid sequence, 49 residues long: Large ribosomal subunit protein bL33A (49 aa).

It belongs to the bacterial ribosomal protein bL33 family.

This chain is Large ribosomal subunit protein bL33A, found in Bacillus pumilus (strain SAFR-032).